The following is a 396-amino-acid chain: G-protein coupled receptor 84 (396 aa).

At 1–21 (MWNSSDANFSCYHESVLGYRY) the chain is on the extracellular side. N3 and N8 each carry an N-linked (GlcNAc...) asparagine glycan. A helical transmembrane segment spans residues 22 to 42 (FAVIWGVAVAVTGTVGNVLTL). Residues 43–57 (LALAIRPKLRTRFNL) are Cytoplasmic-facing. A helical transmembrane segment spans residues 58–78 (LIANLTLADLLYCTLLQPFSV). At 79–94 (DTYLHLHWRTGAVFCR) the chain is on the extracellular side. The chain crosses the membrane as a helical span at residues 95-115 (IFGLLLFTSNSVSILTLCLIA). Residues 116-135 (LGRYLLIAHPKLFPQVFSAK) are Cytoplasmic-facing. Residues 136–156 (GIVLALVGSWVVGVTSFAPLW) traverse the membrane as a helical segment. The Extracellular segment spans residues 157 to 180 (NVFVLVPVVCTCSFDRMRGRPYTT). Residues 181–201 (ILMGIYFVLGLSSVGVFYCLI) form a helical membrane-spanning segment. Residues 202–320 (HRQVKRAARA…PSEFGKVTRM (119 aa)) are Cytoplasmic-facing. Phosphoserine occurs at positions 221 and 224. The interval 241–310 (LDSGVASRGP…TAGARRATDA (70 aa)) is disordered. The span at 253–269 (GISSEPVSAATTQTLEG) shows a compositional bias: polar residues. Residues T263 and T264 each carry the phosphothreonine modification. Residues 290-308 (SLPEVHRKPRETAGARRAT) are compositionally biased toward basic and acidic residues. A helical transmembrane segment spans residues 321–341 (CFAVFLCFALSYIPFLLLNIL). The Extracellular portion of the chain corresponds to 342-352 (DARGRAPRVVH). A helical transmembrane segment spans residues 353–373 (MVAANLTWLNSCINPVLYAAM). The Cytoplasmic segment spans residues 374–396 (NRQFRHAYGSILKRGPQSFRRFH).

Belongs to the G-protein coupled receptor 1 family. Interacts with ARRB2 and ARR3. In terms of processing, phosphorylated by a subset of GPR84-activating ligands. Constitutively phosphorylated at Ser-221 and Ser-224 in the absence of 2-HTP. By contrast, Thr-263 and Thr-264 are phosphorylated only following prior cell treatment with 2-HTP. In terms of tissue distribution, expressed predominantly in hematopoietic tissues. Expressed mainly in the bone marrow with transcripts also detected in spleen, the lymph node, liver and the lung.

Its subcellular location is the cell membrane. In terms of biological role, g protein-coupled receptor that responds endogenously to dietary fatty acids or nutrient, specifically medium-chain free fatty acid (FFA) with carbon chain lengths of C9 to C14. Capric acid (C10:0), undecanoic acid (C11:0) and lauric acid (C12:0) are the most potent agonists. In immune cells, functions as a pro-inflammatory receptor via 6-OAU and promotes the expression of pro-inflammatory mediators such as TNFalpha, IL-6 and IL-12B as well as stimulating chemotactic responses through activation of signaling mediators AKT, ERK and NF-kappa-B (by sim). In addition, triggers increased bacterial adhesion and phagocytosis in macrophages and regulates pro-inflammatory function via enhancing NLRP3 inflammasome activation. Also plays an important role in inflammation by modulating neutrophil functions. Mechanistically, promotes neutrophil chemotaxis, reactive oxygen species (ROS) production and degranulation via LYN-AKT/ERK pathway. To regulate ROS production, communicates with the two formyl peptide receptors FPR2 and FPR1 to control the NADPH oxidase activity in neutrophils. The polypeptide is G-protein coupled receptor 84 (Gpr84) (Mus musculus (Mouse)).